Here is a 345-residue protein sequence, read N- to C-terminus: NADPH dehydrogenase (345 aa).

23–26 (SPMC) is a binding site for FMN. A substrate-binding site is contributed by Tyr28. FMN contacts are provided by Ala60 and Gln102. Residue 164 to 167 (HGAH) coordinates substrate. Residues Arg215 and 307–308 (GR) each bind FMN.

This sequence belongs to the NADH:flavin oxidoreductase/NADH oxidase family. NamA subfamily. Homotetramer. Requires FMN as cofactor.

It catalyses the reaction A + NADPH + H(+) = AH2 + NADP(+). Catalyzes the reduction of the double bond of an array of alpha,beta-unsaturated aldehydes and ketones. It also reduces the nitro group of nitroester and nitroaromatic compounds. It could have a role in detoxification processes. This Bacillus cereus (strain ZK / E33L) protein is NADPH dehydrogenase.